We begin with the raw amino-acid sequence, 237 residues long: 2-C-methyl-D-erythritol 4-phosphate cytidylyltransferase (237 aa).

The protein belongs to the IspD/TarI cytidylyltransferase family. IspD subfamily.

The catalysed reaction is 2-C-methyl-D-erythritol 4-phosphate + CTP + H(+) = 4-CDP-2-C-methyl-D-erythritol + diphosphate. It functions in the pathway isoprenoid biosynthesis; isopentenyl diphosphate biosynthesis via DXP pathway; isopentenyl diphosphate from 1-deoxy-D-xylulose 5-phosphate: step 2/6. In terms of biological role, catalyzes the formation of 4-diphosphocytidyl-2-C-methyl-D-erythritol from CTP and 2-C-methyl-D-erythritol 4-phosphate (MEP). This chain is 2-C-methyl-D-erythritol 4-phosphate cytidylyltransferase, found in Paraburkholderia xenovorans (strain LB400).